A 126-amino-acid chain; its full sequence is Glycine cleavage system H protein (126 aa).

The 83-residue stretch at 22 to 104 (TVTIGITEYA…YEKAWMVKVE (83 aa)) folds into the Lipoyl-binding domain. The residue at position 63 (lysine 63) is an N6-lipoyllysine.

Belongs to the GcvH family. As to quaternary structure, the glycine cleavage system is composed of four proteins: P, T, L and H. (R)-lipoate serves as cofactor.

In terms of biological role, the glycine cleavage system catalyzes the degradation of glycine. The H protein shuttles the methylamine group of glycine from the P protein to the T protein. Functionally, is also involved in protein lipoylation via its role as an octanoyl/lipoyl carrier protein intermediate. This Staphylococcus saprophyticus subsp. saprophyticus (strain ATCC 15305 / DSM 20229 / NCIMB 8711 / NCTC 7292 / S-41) protein is Glycine cleavage system H protein.